A 1123-amino-acid polypeptide reads, in one-letter code: Telomerase reverse transcriptase (1123 aa).

Disordered stretches follow at residues 191–242 (ENKR…KTTK) and 410–439 (GTTS…PKCP). Over residues 201-210 (QPPTKRQWLS) the composition is skewed to polar residues. Positions 596–929 (LVDDAEAESS…PFVRWTGLLI (334 aa)) constitute a Reverse transcriptase domain. Mg(2+) is bound by residues Asp691, Asp860, and Asp861.

Belongs to the reverse transcriptase family. Telomerase subfamily. In terms of assembly, component of the telomerase ribonucleoprotein complex. Interacts with POT1A.

Its subcellular location is the nucleus. It localises to the chromosome. The protein resides in the telomere. It catalyses the reaction DNA(n) + a 2'-deoxyribonucleoside 5'-triphosphate = DNA(n+1) + diphosphate. Telomerase is a ribonucleoprotein enzyme essential for the replication of chromosome termini in most eukaryotes. It elongates telomeres. It is a reverse transcriptase that adds simple sequence repeats to chromosome ends by copying a template sequence within the RNA component of the enzyme. Required to prevent genome instability induced by breakage-fusion-bridge (BFB) cycles. Can extend completely non-telomeric sequences using RNA template in vitro. The protein is Telomerase reverse transcriptase (TERT) of Arabidopsis thaliana (Mouse-ear cress).